The chain runs to 317 residues: Transaldolase (317 aa).

Residue K126 is the Schiff-base intermediate with substrate of the active site.

This sequence belongs to the transaldolase family. Type 1 subfamily. In terms of assembly, homodimer.

The protein localises to the cytoplasm. It catalyses the reaction D-sedoheptulose 7-phosphate + D-glyceraldehyde 3-phosphate = D-erythrose 4-phosphate + beta-D-fructose 6-phosphate. Its pathway is carbohydrate degradation; pentose phosphate pathway; D-glyceraldehyde 3-phosphate and beta-D-fructose 6-phosphate from D-ribose 5-phosphate and D-xylulose 5-phosphate (non-oxidative stage): step 2/3. Its function is as follows. Transaldolase is important for the balance of metabolites in the pentose-phosphate pathway. The polypeptide is Transaldolase (Burkholderia mallei (strain SAVP1)).